We begin with the raw amino-acid sequence, 361 residues long: MAGNSIGQHFRVTTFGESHGLALGCIVDGCPPGLELTEADLQVDLDRRKPGTSKYTTQRREADEVKILSGVFEGKTTGTSIGLLIENTDQRSKDYSEIKDKFRPGHADYTYHQKYGQRDYRGGGRSSARETAMRVAAGAVAKKYLKQEFGIEIRAYLSQMGDVSIDSVDWNEIENNAFFCPDASKVDAFDELIRKLKKEGDSIGAKITVVAQGVPVGLGEPVFARLDADVAHALMGINAVKGVEIGDGFEVVNQRGSEHRDPLTPEGFSSNHAGGILGGISSGQDIVAHIALKPTSSITVPGETITRSGEKTELITKGRHDPCVGIRAVPIAEAMLAIVVMDHLVRHRGQNFGVQTETPKI.

Arg48 contributes to the NADP(+) binding site. Residues Arg125–Ser127, Asn238–Ala239, Gly278, Lys293–Ser297, and Arg319 each bind FMN.

The protein belongs to the chorismate synthase family. Homotetramer. FMNH2 is required as a cofactor.

The catalysed reaction is 5-O-(1-carboxyvinyl)-3-phosphoshikimate = chorismate + phosphate. It participates in metabolic intermediate biosynthesis; chorismate biosynthesis; chorismate from D-erythrose 4-phosphate and phosphoenolpyruvate: step 7/7. Its function is as follows. Catalyzes the anti-1,4-elimination of the C-3 phosphate and the C-6 proR hydrogen from 5-enolpyruvylshikimate-3-phosphate (EPSP) to yield chorismate, which is the branch point compound that serves as the starting substrate for the three terminal pathways of aromatic amino acid biosynthesis. This reaction introduces a second double bond into the aromatic ring system. This chain is Chorismate synthase, found in Aliivibrio fischeri (strain MJ11) (Vibrio fischeri).